The primary structure comprises 511 residues: Bifunctional purine biosynthesis protein PurH (511 aa).

The 145-residue stretch at 1–145 (MKKRALVSVS…KNHKFVSVIV (145 aa)) folds into the MGS-like domain.

It belongs to the PurH family.

It catalyses the reaction (6R)-10-formyltetrahydrofolate + 5-amino-1-(5-phospho-beta-D-ribosyl)imidazole-4-carboxamide = 5-formamido-1-(5-phospho-D-ribosyl)imidazole-4-carboxamide + (6S)-5,6,7,8-tetrahydrofolate. It carries out the reaction IMP + H2O = 5-formamido-1-(5-phospho-D-ribosyl)imidazole-4-carboxamide. The protein operates within purine metabolism; IMP biosynthesis via de novo pathway; 5-formamido-1-(5-phospho-D-ribosyl)imidazole-4-carboxamide from 5-amino-1-(5-phospho-D-ribosyl)imidazole-4-carboxamide (10-formyl THF route): step 1/1. Its pathway is purine metabolism; IMP biosynthesis via de novo pathway; IMP from 5-formamido-1-(5-phospho-D-ribosyl)imidazole-4-carboxamide: step 1/1. The chain is Bifunctional purine biosynthesis protein PurH from Bacillus cereus (strain ZK / E33L).